Here is a 221-residue protein sequence, read N- to C-terminus: Epididymal secretory glutathione peroxidase (221 aa).

The N-terminal stretch at 1–21 is a signal peptide; it reads MTAWLGASYVLPILLVSFVQT. C73 is an active-site residue.

It belongs to the glutathione peroxidase family. As to expression, epididymis.

The protein resides in the secreted. The enzyme catalyses 2 glutathione + H2O2 = glutathione disulfide + 2 H2O. Functionally, protects cells and enzymes from oxidative damage, by catalyzing the reduction of hydrogen peroxide, lipid peroxides and organic hydroperoxide, by glutathione. May constitute a glutathione peroxidase-like protective system against peroxide damage in sperm membrane lipids. The sequence is that of Epididymal secretory glutathione peroxidase (GPX5) from Canis lupus familiaris (Dog).